The primary structure comprises 496 residues: Cytochrome f, chloroplastic (496 aa).

Residues 1-149 constitute a chloroplast transit peptide; sequence MASLQTPVMV…VGAAAGSANA (149 aa). Heme is bound by residues Y150, C170, C173, and H174. A helical transmembrane segment spans residues 462–481; sequence VQAFLFFSFTVLATQTLLVV.

This sequence belongs to the cytochrome f family. Interacts with plastocyanin and Rieske iron-sulfur protein. Heme serves as cofactor.

The protein resides in the plastid. The protein localises to the chloroplast thylakoid membrane. Functionally, translocates protons across the thylakoid membrane and transfers electrons from photosystem II to photosystem I. It receives electrons from the Rieske iron-sulfur protein and passes them to plastocyanin. This Euglena gracilis protein is Cytochrome f, chloroplastic (petA).